Here is a 342-residue protein sequence, read N- to C-terminus: Dihydroorotase (342 aa).

2 residues coordinate Zn(2+): H13 and H15. Residues 15-17 (HLR) and N41 each bind substrate. 3 residues coordinate Zn(2+): K98, H135, and H173. Residue K98 is modified to N6-carboxylysine. Residue H135 coordinates substrate. Residue L218 participates in substrate binding. D246 contributes to the Zn(2+) binding site. D246 is an active-site residue. 2 residues coordinate substrate: H250 and A262.

Belongs to the metallo-dependent hydrolases superfamily. DHOase family. Class II DHOase subfamily. In terms of assembly, homodimer. Requires Zn(2+) as cofactor.

The catalysed reaction is (S)-dihydroorotate + H2O = N-carbamoyl-L-aspartate + H(+). Its pathway is pyrimidine metabolism; UMP biosynthesis via de novo pathway; (S)-dihydroorotate from bicarbonate: step 3/3. Catalyzes the reversible cyclization of carbamoyl aspartate to dihydroorotate. This Vibrio vulnificus (strain YJ016) protein is Dihydroorotase.